We begin with the raw amino-acid sequence, 491 residues long: Protein nucleotidyltransferase YdiU (491 aa).

Residues Gly88, Gly90, Arg91, Lys111, Asp123, Gly124, Arg174, and Arg181 each coordinate ATP. Asp250 acts as the Proton acceptor in catalysis. Mg(2+)-binding residues include Asn251 and Asp260. ATP is bound at residue Asp260.

Belongs to the SELO family. Mg(2+) is required as a cofactor. Mn(2+) serves as cofactor.

It carries out the reaction L-seryl-[protein] + ATP = 3-O-(5'-adenylyl)-L-seryl-[protein] + diphosphate. The enzyme catalyses L-threonyl-[protein] + ATP = 3-O-(5'-adenylyl)-L-threonyl-[protein] + diphosphate. The catalysed reaction is L-tyrosyl-[protein] + ATP = O-(5'-adenylyl)-L-tyrosyl-[protein] + diphosphate. It catalyses the reaction L-histidyl-[protein] + UTP = N(tele)-(5'-uridylyl)-L-histidyl-[protein] + diphosphate. It carries out the reaction L-seryl-[protein] + UTP = O-(5'-uridylyl)-L-seryl-[protein] + diphosphate. The enzyme catalyses L-tyrosyl-[protein] + UTP = O-(5'-uridylyl)-L-tyrosyl-[protein] + diphosphate. Nucleotidyltransferase involved in the post-translational modification of proteins. It can catalyze the addition of adenosine monophosphate (AMP) or uridine monophosphate (UMP) to a protein, resulting in modifications known as AMPylation and UMPylation. This chain is Protein nucleotidyltransferase YdiU, found in Bradyrhizobium diazoefficiens (strain JCM 10833 / BCRC 13528 / IAM 13628 / NBRC 14792 / USDA 110).